The sequence spans 445 residues: UPF0210 protein SZO_15840 (445 aa).

The protein belongs to the UPF0210 family. As to quaternary structure, homodimer.

This chain is UPF0210 protein SZO_15840, found in Streptococcus equi subsp. zooepidemicus (strain H70).